Here is a 294-residue protein sequence, read N- to C-terminus: Indole-3-glycerol phosphate synthase (294 aa).

It belongs to the TrpC family.

The enzyme catalyses 1-(2-carboxyphenylamino)-1-deoxy-D-ribulose 5-phosphate + H(+) = (1S,2R)-1-C-(indol-3-yl)glycerol 3-phosphate + CO2 + H2O. It functions in the pathway amino-acid biosynthesis; L-tryptophan biosynthesis; L-tryptophan from chorismate: step 4/5. This is Indole-3-glycerol phosphate synthase from Synechococcus sp. (strain CC9902).